Reading from the N-terminus, the 183-residue chain is ATP synthase subunit b, chloroplastic (183 aa).

Residues 25–45 (DILATNLINLTVVVGVLIFFG) form a helical membrane-spanning segment.

This sequence belongs to the ATPase B chain family. In terms of assembly, F-type ATPases have 2 components, F(1) - the catalytic core - and F(0) - the membrane proton channel. F(1) has five subunits: alpha(3), beta(3), gamma(1), delta(1), epsilon(1). F(0) has four main subunits: a(1), b(1), b'(1) and c(10-14). The alpha and beta chains form an alternating ring which encloses part of the gamma chain. F(1) is attached to F(0) by a central stalk formed by the gamma and epsilon chains, while a peripheral stalk is formed by the delta, b and b' chains.

It is found in the plastid. It localises to the chloroplast thylakoid membrane. In terms of biological role, f(1)F(0) ATP synthase produces ATP from ADP in the presence of a proton or sodium gradient. F-type ATPases consist of two structural domains, F(1) containing the extramembraneous catalytic core and F(0) containing the membrane proton channel, linked together by a central stalk and a peripheral stalk. During catalysis, ATP synthesis in the catalytic domain of F(1) is coupled via a rotary mechanism of the central stalk subunits to proton translocation. Component of the F(0) channel, it forms part of the peripheral stalk, linking F(1) to F(0). The sequence is that of ATP synthase subunit b, chloroplastic from Zea mays (Maize).